Here is a 247-residue protein sequence, read N- to C-terminus: ATP synthase subunit a, chloroplastic (247 aa).

Transmembrane regions (helical) follow at residues 38–58 (QVLI…TIAV), 95–115 (VPFI…GALL), 134–154 (INTT…AGFT), 199–219 (LVVV…VMFL), and 220–240 (GLFT…AYIG).

It belongs to the ATPase A chain family. As to quaternary structure, F-type ATPases have 2 components, CF(1) - the catalytic core - and CF(0) - the membrane proton channel. CF(1) has five subunits: alpha(3), beta(3), gamma(1), delta(1), epsilon(1). CF(0) has four main subunits: a, b, b' and c.

Its subcellular location is the plastid. The protein resides in the chloroplast thylakoid membrane. In terms of biological role, key component of the proton channel; it plays a direct role in the translocation of protons across the membrane. This Liriodendron tulipifera (Tuliptree) protein is ATP synthase subunit a, chloroplastic.